A 255-amino-acid polypeptide reads, in one-letter code: Small ribosomal subunit protein uS2 (255 aa).

The interval 230–255 (QSSSGRDLGASSEVPVEPALEEAAEG) is disordered.

It belongs to the universal ribosomal protein uS2 family.

The polypeptide is Small ribosomal subunit protein uS2 (Rhizobium etli (strain CIAT 652)).